A 267-amino-acid polypeptide reads, in one-letter code: Glutamate racemase (267 aa).

Substrate contacts are provided by residues 10-11 and 42-43; these read DS and YG. Cys-73 (proton donor/acceptor) is an active-site residue. Position 74–75 (74–75) interacts with substrate; it reads NT. Cys-183 acts as the Proton donor/acceptor in catalysis. Substrate is bound at residue 184-185; it reads TH.

The protein belongs to the aspartate/glutamate racemases family.

It catalyses the reaction L-glutamate = D-glutamate. It participates in cell wall biogenesis; peptidoglycan biosynthesis. Provides the (R)-glutamate required for cell wall biosynthesis. The sequence is that of Glutamate racemase from Lactobacillus helveticus (strain DPC 4571).